A 637-amino-acid chain; its full sequence is DNA mismatch repair protein MutL (637 aa).

Over residues Gly-353 to Ala-371 the composition is skewed to polar residues. The disordered stretch occupies residues Gly-353–Asp-444. Over residues Asp-378–Trp-389 the composition is skewed to basic and acidic residues. The span at Pro-396–Gly-406 shows a compositional bias: pro residues. A compositionally biased stretch (basic and acidic residues) spans Ser-430–Asp-444.

This sequence belongs to the DNA mismatch repair MutL/HexB family.

This protein is involved in the repair of mismatches in DNA. It is required for dam-dependent methyl-directed DNA mismatch repair. May act as a 'molecular matchmaker', a protein that promotes the formation of a stable complex between two or more DNA-binding proteins in an ATP-dependent manner without itself being part of a final effector complex. The protein is DNA mismatch repair protein MutL of Beijerinckia indica subsp. indica (strain ATCC 9039 / DSM 1715 / NCIMB 8712).